Reading from the N-terminus, the 259-residue chain is Ribonuclease HII (259 aa).

The RNase H type-2 domain occupies 70–258 (TLIAGIDEVG…VKSLVLGKKE (189 aa)). Residues aspartate 76, glutamate 77, and aspartate 168 each coordinate a divalent metal cation.

It belongs to the RNase HII family. Mn(2+) is required as a cofactor. It depends on Mg(2+) as a cofactor.

It localises to the cytoplasm. It carries out the reaction Endonucleolytic cleavage to 5'-phosphomonoester.. Its function is as follows. Endonuclease that specifically degrades the RNA of RNA-DNA hybrids. The protein is Ribonuclease HII of Streptococcus pneumoniae (strain 70585).